A 1264-amino-acid polypeptide reads, in one-letter code: Protein fantom (1264 aa).

Coiled-coil stretches lie at residues 64 to 143, 196 to 268, 299 to 454, and 488 to 555; these read LKQH…LQVQ, YSNS…NVET, LRIS…ESDI, and NKDL…VHLL. 2 consecutive C2 domains span residues 577-714 and 773-897; these read KQYK…FCTT and AATT…SGIF. 2 disordered regions span residues 979–1018 and 1047–1093; these read DTISHPSPETSPPPKDIKDSSPEVGPKPENGLSAVAYPSK and QLAS…NTKQ. Positions 1056–1080 are enriched in acidic residues; sequence SEDETEITEELEPEDEDRSASDSDD.

It belongs to the RPGRIP1 family. Interacts with NPHP4 and NPHP1; NPHP1, NPHP4 and RPGRIP1L are proposed to form a functional NPHP1-4-8 module localized to cell-cell contacts and the ciliary transition zone; NPHP4 mediates the interaction between NPHP1 and RPGRIP1L. Interacts with IQCB1; the interaction likely requires additional interactors. Interacts with TBXA2R (via C-terminus), RPGR, NEK4. Interacts with NPHP4, INVS and DVL2; proposed to form a complex involved in DVL2 stabilization. Interacts with PSMD2. In terms of tissue distribution, ubiquitously expressed. Not found in heart and skin.

Its subcellular location is the cytoplasm. It localises to the cytoskeleton. The protein resides in the cilium basal body. It is found in the cilium axoneme. The protein localises to the microtubule organizing center. Its subcellular location is the centrosome. It localises to the cell junction. The protein resides in the tight junction. Negatively regulates signaling through the G-protein coupled thromboxane A2 receptor (TBXA2R). May be involved in mechanisms like programmed cell death, craniofacial development, patterning of the limbs, and formation of the left-right axis. Involved in the organization of apical junctions; the function is proposed to implicate a NPHP1-4-8 module. Does not seem to be strictly required for ciliogenesis. Involved in establishment of planar cell polarity such as in cochlear sensory epithelium and is proposed to implicate stabilization of disheveled proteins. Involved in regulation of proteasomal activity at the primary cilium probably implicating association with PSDM2. This Mus musculus (Mouse) protein is Protein fantom (Rpgrip1l).